The chain runs to 263 residues: 3-methyl-2-oxobutanoate hydroxymethyltransferase (263 aa).

Positions 45 and 84 each coordinate Mg(2+). 3-methyl-2-oxobutanoate contacts are provided by residues 45 to 46 (DS), Asp-84, and Lys-112. Glu-114 provides a ligand contact to Mg(2+). Glu-181 acts as the Proton acceptor in catalysis.

This sequence belongs to the PanB family. As to quaternary structure, homodecamer; pentamer of dimers. The cofactor is Mg(2+).

The protein localises to the cytoplasm. The enzyme catalyses 3-methyl-2-oxobutanoate + (6R)-5,10-methylene-5,6,7,8-tetrahydrofolate + H2O = 2-dehydropantoate + (6S)-5,6,7,8-tetrahydrofolate. Its pathway is cofactor biosynthesis; (R)-pantothenate biosynthesis; (R)-pantoate from 3-methyl-2-oxobutanoate: step 1/2. Catalyzes the reversible reaction in which hydroxymethyl group from 5,10-methylenetetrahydrofolate is transferred onto alpha-ketoisovalerate to form ketopantoate. In Buchnera aphidicola subsp. Acyrthosiphon pisum (strain APS) (Acyrthosiphon pisum symbiotic bacterium), this protein is 3-methyl-2-oxobutanoate hydroxymethyltransferase.